The primary structure comprises 185 residues: Ribosome-recycling factor (185 aa).

This sequence belongs to the RRF family.

Its subcellular location is the cytoplasm. Its function is as follows. Responsible for the release of ribosomes from messenger RNA at the termination of protein biosynthesis. May increase the efficiency of translation by recycling ribosomes from one round of translation to another. The sequence is that of Ribosome-recycling factor from Mycobacteroides abscessus (strain ATCC 19977 / DSM 44196 / CCUG 20993 / CIP 104536 / JCM 13569 / NCTC 13031 / TMC 1543 / L948) (Mycobacterium abscessus).